Consider the following 240-residue polypeptide: 3-deoxy-D-manno-octulosonic acid kinase (240 aa).

Asp-170 is a catalytic residue.

Belongs to the protein kinase superfamily. KdkA/RfaP family.

The protein resides in the cell inner membrane. It carries out the reaction an alpha-Kdo-(2-&gt;6)-lipid IVA + ATP = a 4-O-phospho-alpha-Kdo-(2-&gt;6)-lipid IVA + ADP + H(+). Its pathway is bacterial outer membrane biogenesis; LPS core biosynthesis. Its function is as follows. Catalyzes the ATP-dependent phosphorylation of the 3-deoxy-D-manno-octulosonic acid (Kdo) residue in Kdo-lipid IV(A) at the 4-OH position. This chain is 3-deoxy-D-manno-octulosonic acid kinase, found in Mannheimia succiniciproducens (strain KCTC 0769BP / MBEL55E).